Reading from the N-terminus, the 387-residue chain is Oxidase FUB9 (387 aa).

The segment at 1 to 20 (MSRTNLPIQPAKMSDATSSK) is disordered. In terms of domain architecture, FMN hydroxy acid dehydrogenase spans 18–379 (SSKPQIFSIQ…TPAHLSLLNA (362 aa)). An a 2-oxocarboxylate-binding site is contributed by Tyr-44. 3 residues coordinate FMN: Ser-126, Gln-150, and Thr-178. A 2-oxocarboxylate is bound at residue Arg-187. FMN is bound at residue Lys-250. His-274 serves as the catalytic Proton acceptor. Residue Arg-277 coordinates a 2-oxocarboxylate. FMN is bound by residues 305–309 (DGGFR) and 328–329 (GR).

The protein belongs to the FMN-dependent alpha-hydroxy acid dehydrogenase family. FMN serves as cofactor.

It functions in the pathway mycotoxin biosynthesis. Functionally, oxidase; part of the gene cluster that mediates the biosynthesis of fusaric acid, a mycotoxin with low to moderate toxicity to animals and humans, but with high phytotoxic properties. L-aspartate is suggested as fusaric acid amino acid precursor that is activated and further processed to O-acetyl-L-homoserine by cluster enzymes aspartate kinase FUB3 and homoserine O-acetyltransferase FUB5, as well as enzymes of the primary metabolism. The polyketide synthase (PKS) FUB1 generates the triketide trans-2-hexenal which is presumptively released by the hydrolase FUB4 and linked to the NRPS-bound amino acid precursor by NAD(P)-dependent dehydrogenase FUB6. FUB1, FUB4, and the non-canonical NRPS Fub8 may form an enzyme complex. Further processing of the NRPS-bound intermediate might be carried out by FUB6 and the sulfhydrylase FUB7, enabling a spontaneous electrocyclization to close the carbon backbone of fusaric acid. Dihydrofusaric acid is likely to be released via reduction by the thioester reductase (TR) domain of FUB8 whereupon the final oxidation to fusaric acid may (also) be performed by the FMN-dependent dehydrogenase FUB9. The sequence is that of Oxidase FUB9 from Gibberella moniliformis (strain M3125 / FGSC 7600) (Maize ear and stalk rot fungus).